We begin with the raw amino-acid sequence, 611 residues long: tRNA uridine 5-carboxymethylaminomethyl modification enzyme MnmG (611 aa).

14-19 (GAGHAG) serves as a coordination point for FAD. 274 to 288 (GPRYCPSIEDKIVKF) provides a ligand contact to NAD(+).

This sequence belongs to the MnmG family. As to quaternary structure, homodimer. Heterotetramer of two MnmE and two MnmG subunits. FAD is required as a cofactor.

The protein localises to the cytoplasm. Functionally, NAD-binding protein involved in the addition of a carboxymethylaminomethyl (cmnm) group at the wobble position (U34) of certain tRNAs, forming tRNA-cmnm(5)s(2)U34. The protein is tRNA uridine 5-carboxymethylaminomethyl modification enzyme MnmG of Chlamydia abortus (strain DSM 27085 / S26/3) (Chlamydophila abortus).